A 95-amino-acid chain; its full sequence is Probable FAD-linked sulfhydryl oxidase OPG072 (95 aa).

Topologically, residues 1–8 (MNPKHWGR) are intravirion. The ERV/ALR sulfhydryl oxidase domain maps to 1–95 (MNPKHWGRAV…AIDVSKVKPL (95 aa)). The chain crosses the membrane as a helical span at residues 9 to 25 (AVWTIIFIVLSQAGLDG). Over 26-95 (NIEACKRKLY…AIDVSKVKPL (70 aa)) the chain is Virion surface. The cysteines at positions 43 and 46 are disulfide-linked.

It belongs to the orthopoxvirus OPG072 family. In terms of assembly, interacts with OPG128; this interaction involves formation of a transient disulfide-bonded intermediate, allowing disulfide bond transfer. FAD serves as cofactor.

The protein resides in the virion membrane. It localises to the host cytoplasm. It catalyses the reaction 2 R'C(R)SH + O2 = R'C(R)S-S(R)CR' + H2O2. In terms of biological role, FAD-dependent sulfhydryl oxidase that catalyzes disulfide bond formation. The complete pathway for formation of disulfide bonds in intracellular virion membrane proteins sequentially involves thiol-disulfide transfer between OPG072, OPG128 and OPG088. The protein is Probable FAD-linked sulfhydryl oxidase OPG072 (OPG072) of Monkeypox virus.